We begin with the raw amino-acid sequence, 199 residues long: 3-isopropylmalate dehydratase small subunit (199 aa).

It belongs to the LeuD family. LeuD type 1 subfamily. As to quaternary structure, heterodimer of LeuC and LeuD.

It carries out the reaction (2R,3S)-3-isopropylmalate = (2S)-2-isopropylmalate. It participates in amino-acid biosynthesis; L-leucine biosynthesis; L-leucine from 3-methyl-2-oxobutanoate: step 2/4. In terms of biological role, catalyzes the isomerization between 2-isopropylmalate and 3-isopropylmalate, via the formation of 2-isopropylmaleate. This chain is 3-isopropylmalate dehydratase small subunit, found in Mycobacteroides abscessus (strain ATCC 19977 / DSM 44196 / CCUG 20993 / CIP 104536 / JCM 13569 / NCTC 13031 / TMC 1543 / L948) (Mycobacterium abscessus).